Here is a 120-residue protein sequence, read N- to C-terminus: Ribosome-binding factor A (120 aa).

The protein belongs to the RbfA family. Monomer. Binds 30S ribosomal subunits, but not 50S ribosomal subunits or 70S ribosomes.

The protein localises to the cytoplasm. Functionally, one of several proteins that assist in the late maturation steps of the functional core of the 30S ribosomal subunit. Associates with free 30S ribosomal subunits (but not with 30S subunits that are part of 70S ribosomes or polysomes). Required for efficient processing of 16S rRNA. May interact with the 5'-terminal helix region of 16S rRNA. This is Ribosome-binding factor A from Limosilactobacillus fermentum (strain NBRC 3956 / LMG 18251) (Lactobacillus fermentum).